Here is a 116-residue protein sequence, read N- to C-terminus: Large ribosomal subunit protein bL19 (116 aa).

The protein belongs to the bacterial ribosomal protein bL19 family.

Functionally, this protein is located at the 30S-50S ribosomal subunit interface and may play a role in the structure and function of the aminoacyl-tRNA binding site. In Pseudomonas aeruginosa (strain LESB58), this protein is Large ribosomal subunit protein bL19.